Consider the following 57-residue polypeptide: UPF0391 membrane protein Atu4467 (57 aa).

A run of 2 helical transmembrane segments spans residues 4 to 24 (WALI…TGIS) and 33 to 53 (ILFF…LMAG).

Belongs to the UPF0391 family.

Its subcellular location is the cell membrane. This Agrobacterium fabrum (strain C58 / ATCC 33970) (Agrobacterium tumefaciens (strain C58)) protein is UPF0391 membrane protein Atu4467.